The primary structure comprises 276 residues: Pantothenate synthetase (276 aa).

27-34 serves as a coordination point for ATP; sequence MGALHRGH. The active-site Proton donor is the H34. Residue Q58 coordinates (R)-pantoate. Q58 is a binding site for beta-alanine. 147–150 serves as a coordination point for ATP; that stretch reads GKKD. Residue Q153 participates in (R)-pantoate binding. Residues A176 and 184 to 187 contribute to the ATP site; that span reads LSSR.

This sequence belongs to the pantothenate synthetase family. As to quaternary structure, homodimer.

It is found in the cytoplasm. The enzyme catalyses (R)-pantoate + beta-alanine + ATP = (R)-pantothenate + AMP + diphosphate + H(+). It functions in the pathway cofactor biosynthesis; (R)-pantothenate biosynthesis; (R)-pantothenate from (R)-pantoate and beta-alanine: step 1/1. Its function is as follows. Catalyzes the condensation of pantoate with beta-alanine in an ATP-dependent reaction via a pantoyl-adenylate intermediate. The chain is Pantothenate synthetase from Helicobacter pylori (strain P12).